The sequence spans 393 residues: Fructose-bisphosphate aldolase 4, cytosolic (393 aa).

R73 lines the substrate pocket. C207 is modified (S-glutathionyl cysteine; transient; alternate). C207 carries the S-nitrosocysteine; transient; alternate modification. E217 acts as the Proton acceptor in catalysis. The active-site Schiff-base intermediate with dihydroxyacetone-P is the K259. Residues S301 to G303 and R333 each bind substrate.

The protein belongs to the class I fructose-bisphosphate aldolase family. In terms of assembly, homotetramer. In terms of processing, S-glutathionylated at Cys-207. S-nitrosylated at Cys-207. As to expression, highly expressed in flowers.

The protein localises to the cytoplasm. It is found in the cytosol. The catalysed reaction is beta-D-fructose 1,6-bisphosphate = D-glyceraldehyde 3-phosphate + dihydroxyacetone phosphate. It functions in the pathway carbohydrate degradation; glycolysis; D-glyceraldehyde 3-phosphate and glycerone phosphate from D-glucose: step 4/4. In terms of biological role, fructose-bisphosphate aldolase that plays a key role in glycolysis and gluconeogenesis. The polypeptide is Fructose-bisphosphate aldolase 4, cytosolic (Arabidopsis thaliana (Mouse-ear cress)).